A 118-amino-acid chain; its full sequence is Small ribosomal subunit protein uS13 (118 aa).

The disordered stretch occupies residues 94 to 118 (GLPLRGQRTKTNARTRKGPRKPIRK).

The protein belongs to the universal ribosomal protein uS13 family. Part of the 30S ribosomal subunit. Forms a loose heterodimer with protein S19. Forms two bridges to the 50S subunit in the 70S ribosome.

Its function is as follows. Located at the top of the head of the 30S subunit, it contacts several helices of the 16S rRNA. In the 70S ribosome it contacts the 23S rRNA (bridge B1a) and protein L5 of the 50S subunit (bridge B1b), connecting the 2 subunits; these bridges are implicated in subunit movement. Contacts the tRNAs in the A and P-sites. The chain is Small ribosomal subunit protein uS13 from Chromohalobacter salexigens (strain ATCC BAA-138 / DSM 3043 / CIP 106854 / NCIMB 13768 / 1H11).